A 365-amino-acid polypeptide reads, in one-letter code: UDP-N-acetylglucosamine--N-acetylmuramyl-(pentapeptide) pyrophosphoryl-undecaprenol N-acetylglucosamine transferase (365 aa).

Residues T17–G19, N129, R167, S194, I250, A269–E274, and Q295 each bind UDP-N-acetyl-alpha-D-glucosamine.

The protein belongs to the glycosyltransferase 28 family. MurG subfamily.

The protein resides in the cell inner membrane. The catalysed reaction is di-trans,octa-cis-undecaprenyl diphospho-N-acetyl-alpha-D-muramoyl-L-alanyl-D-glutamyl-meso-2,6-diaminopimeloyl-D-alanyl-D-alanine + UDP-N-acetyl-alpha-D-glucosamine = di-trans,octa-cis-undecaprenyl diphospho-[N-acetyl-alpha-D-glucosaminyl-(1-&gt;4)]-N-acetyl-alpha-D-muramoyl-L-alanyl-D-glutamyl-meso-2,6-diaminopimeloyl-D-alanyl-D-alanine + UDP + H(+). Its pathway is cell wall biogenesis; peptidoglycan biosynthesis. Functionally, cell wall formation. Catalyzes the transfer of a GlcNAc subunit on undecaprenyl-pyrophosphoryl-MurNAc-pentapeptide (lipid intermediate I) to form undecaprenyl-pyrophosphoryl-MurNAc-(pentapeptide)GlcNAc (lipid intermediate II). This is UDP-N-acetylglucosamine--N-acetylmuramyl-(pentapeptide) pyrophosphoryl-undecaprenol N-acetylglucosamine transferase from Shewanella violacea (strain JCM 10179 / CIP 106290 / LMG 19151 / DSS12).